An 80-amino-acid polypeptide reads, in one-letter code: Cell division protein ZapB (80 aa).

Residues 3–80 are a coiled coil; it reads FEVLEQLEAK…NLLGKMDDVE (78 aa).

It belongs to the ZapB family. Homodimer. The ends of the coiled-coil dimer bind to each other, forming polymers. Interacts with FtsZ.

The protein resides in the cytoplasm. In terms of biological role, non-essential, abundant cell division factor that is required for proper Z-ring formation. It is recruited early to the divisome by direct interaction with FtsZ, stimulating Z-ring assembly and thereby promoting cell division earlier in the cell cycle. Its recruitment to the Z-ring requires functional FtsA or ZipA. This chain is Cell division protein ZapB, found in Vibrio atlanticus (strain LGP32) (Vibrio splendidus (strain Mel32)).